We begin with the raw amino-acid sequence, 422 residues long: UDP-N-acetylglucosamine 1-carboxyvinyltransferase (422 aa).

22–23 is a binding site for phosphoenolpyruvate; it reads KN. R93 provides a ligand contact to UDP-N-acetyl-alpha-D-glucosamine. The Proton donor role is filled by C117. A 2-(S-cysteinyl)pyruvic acid O-phosphothioketal modification is found at C117. Residues 122–126, D305, and I327 contribute to the UDP-N-acetyl-alpha-D-glucosamine site; that span reads RPVDQ.

The protein belongs to the EPSP synthase family. MurA subfamily.

It localises to the cytoplasm. The catalysed reaction is phosphoenolpyruvate + UDP-N-acetyl-alpha-D-glucosamine = UDP-N-acetyl-3-O-(1-carboxyvinyl)-alpha-D-glucosamine + phosphate. The protein operates within cell wall biogenesis; peptidoglycan biosynthesis. In terms of biological role, cell wall formation. Adds enolpyruvyl to UDP-N-acetylglucosamine. The sequence is that of UDP-N-acetylglucosamine 1-carboxyvinyltransferase from Bordetella bronchiseptica (strain ATCC BAA-588 / NCTC 13252 / RB50) (Alcaligenes bronchisepticus).